The sequence spans 301 residues: Sulfate adenylyltransferase subunit 2 (301 aa).

The protein belongs to the PAPS reductase family. CysD subfamily. Heterodimer composed of CysD, the smaller subunit, and CysN.

The catalysed reaction is sulfate + ATP + H(+) = adenosine 5'-phosphosulfate + diphosphate. It functions in the pathway sulfur metabolism; hydrogen sulfide biosynthesis; sulfite from sulfate: step 1/3. Its function is as follows. With CysN forms the ATP sulfurylase (ATPS) that catalyzes the adenylation of sulfate producing adenosine 5'-phosphosulfate (APS) and diphosphate, the first enzymatic step in sulfur assimilation pathway. APS synthesis involves the formation of a high-energy phosphoric-sulfuric acid anhydride bond driven by GTP hydrolysis by CysN coupled to ATP hydrolysis by CysD. The polypeptide is Sulfate adenylyltransferase subunit 2 (Shewanella loihica (strain ATCC BAA-1088 / PV-4)).